The primary structure comprises 68 residues: Conotoxin reg3.14 (68 aa).

Residues 1–22 (MMSKLGVLLTICLLLFPLSVLP) form the signal peptide. Positions 23–52 (LDGDQPADQPAERMQDISAEQNPWFDPVKR) are excised as a propeptide. 3 disulfide bridges follow: Cys-53-Cys-68, Cys-54-Cys-64, and Cys-59-Cys-67.

Belongs to the conotoxin M superfamily. Expressed by the venom duct.

It localises to the secreted. The polypeptide is Conotoxin reg3.14 (Conus regius (Crown cone)).